The sequence spans 367 residues: GTP cyclohydrolase FolE2 (367 aa).

This sequence belongs to the GTP cyclohydrolase IV family.

It catalyses the reaction GTP + H2O = 7,8-dihydroneopterin 3'-triphosphate + formate + H(+). The protein operates within cofactor biosynthesis; 7,8-dihydroneopterin triphosphate biosynthesis; 7,8-dihydroneopterin triphosphate from GTP: step 1/1. Converts GTP to 7,8-dihydroneopterin triphosphate. The sequence is that of GTP cyclohydrolase FolE2 from Dinoroseobacter shibae (strain DSM 16493 / NCIMB 14021 / DFL 12).